The chain runs to 207 residues: Thiamine-phosphate synthase (207 aa).

4-amino-2-methyl-5-(diphosphooxymethyl)pyrimidine is bound by residues 36 to 40 (QLRLK) and Asn-68. Mg(2+)-binding residues include Asp-69 and Asp-88. Thr-107 contacts 4-amino-2-methyl-5-(diphosphooxymethyl)pyrimidine. Residue 134–136 (TGT) coordinates 2-[(2R,5Z)-2-carboxy-4-methylthiazol-5(2H)-ylidene]ethyl phosphate. Lys-137 lines the 4-amino-2-methyl-5-(diphosphooxymethyl)pyrimidine pocket. Gly-164 contributes to the 2-[(2R,5Z)-2-carboxy-4-methylthiazol-5(2H)-ylidene]ethyl phosphate binding site.

Belongs to the thiamine-phosphate synthase family. Mg(2+) is required as a cofactor.

It catalyses the reaction 2-[(2R,5Z)-2-carboxy-4-methylthiazol-5(2H)-ylidene]ethyl phosphate + 4-amino-2-methyl-5-(diphosphooxymethyl)pyrimidine + 2 H(+) = thiamine phosphate + CO2 + diphosphate. The catalysed reaction is 2-(2-carboxy-4-methylthiazol-5-yl)ethyl phosphate + 4-amino-2-methyl-5-(diphosphooxymethyl)pyrimidine + 2 H(+) = thiamine phosphate + CO2 + diphosphate. The enzyme catalyses 4-methyl-5-(2-phosphooxyethyl)-thiazole + 4-amino-2-methyl-5-(diphosphooxymethyl)pyrimidine + H(+) = thiamine phosphate + diphosphate. It functions in the pathway cofactor biosynthesis; thiamine diphosphate biosynthesis; thiamine phosphate from 4-amino-2-methyl-5-diphosphomethylpyrimidine and 4-methyl-5-(2-phosphoethyl)-thiazole: step 1/1. In terms of biological role, condenses 4-methyl-5-(beta-hydroxyethyl)thiazole monophosphate (THZ-P) and 2-methyl-4-amino-5-hydroxymethyl pyrimidine pyrophosphate (HMP-PP) to form thiamine monophosphate (TMP). The chain is Thiamine-phosphate synthase from Rhodospirillum centenum (strain ATCC 51521 / SW).